A 202-amino-acid polypeptide reads, in one-letter code: 3-isopropylmalate dehydratase small subunit 2 (202 aa).

The protein belongs to the LeuD family. LeuD type 1 subfamily. As to quaternary structure, heterodimer of LeuC and LeuD.

The catalysed reaction is (2R,3S)-3-isopropylmalate = (2S)-2-isopropylmalate. It participates in amino-acid biosynthesis; L-leucine biosynthesis; L-leucine from 3-methyl-2-oxobutanoate: step 2/4. In terms of biological role, catalyzes the isomerization between 2-isopropylmalate and 3-isopropylmalate, via the formation of 2-isopropylmaleate. The chain is 3-isopropylmalate dehydratase small subunit 2 from Bordetella parapertussis (strain 12822 / ATCC BAA-587 / NCTC 13253).